Consider the following 322-residue polypeptide: Beta-carotene 3-hydroxylase, chloroplastic (322 aa).

Residues 1-68 (TFHKPVSGAS…AQRCSLVRLR (68 aa)) constitute a chloroplast transit peptide. 2 helical membrane-spanning segments follow: residues 118 to 138 (QAAA…ATYL) and 149 to 169 (AVPW…ALGM). Residues 164 to 286 (GGALGMEMYA…AHQLHHSGKY (123 aa)) form the Fatty acid hydroxylase domain. Residues 177-182 (HKAIWH) carry the Histidine box-1 motif. The Histidine box-2 motif lies at 191-195 (HKSHH). 2 helical membrane passes run 207 to 227 (LFAI…FWLP) and 231 to 251 (GAAC…YMFV). A Histidine box-3 motif is present at residues 252-257 (HDGLVH). Residues 278–282 (HQLHH) carry the Histidine box-4 motif.

The protein belongs to the sterol desaturase family.

The protein resides in the plastid. It localises to the chloroplast membrane. It catalyses the reaction all-trans-beta-carotene + 4 reduced [2Fe-2S]-[ferredoxin] + 2 O2 + 4 H(+) = all-trans-zeaxanthin + 4 oxidized [2Fe-2S]-[ferredoxin] + 2 H2O. Nonheme diiron monooxygenase involved in the biosynthesis of astaxanthin. Hydroxylates beta-ring of beta-carotene and catalyzes the conversion of canthaxanthin to astaxanthin. Uses ferredoxin as an electron donor. The protein is Beta-carotene 3-hydroxylase, chloroplastic (CRTZ) of Haematococcus lacustris (Green alga).